A 513-amino-acid polypeptide reads, in one-letter code: 2,3-bisphosphoglycerate-independent phosphoglycerate mutase (513 aa).

Mn(2+) is bound by residues D15 and S65. S65 acts as the Phosphoserine intermediate in catalysis. Residues H126, R156–D157, R188, R194, R263–R266, and K337 each bind substrate. The Mn(2+) site is built by D402, H406, D443, H444, and H461.

It belongs to the BPG-independent phosphoglycerate mutase family. In terms of assembly, monomer. Requires Mn(2+) as cofactor.

The catalysed reaction is (2R)-2-phosphoglycerate = (2R)-3-phosphoglycerate. It functions in the pathway carbohydrate degradation; glycolysis; pyruvate from D-glyceraldehyde 3-phosphate: step 3/5. Its function is as follows. Catalyzes the interconversion of 2-phosphoglycerate and 3-phosphoglycerate. This chain is 2,3-bisphosphoglycerate-independent phosphoglycerate mutase, found in Moorella thermoacetica (strain ATCC 39073 / JCM 9320).